The sequence spans 971 residues: DNA-directed RNA polymerase subunit Rpo1N (971 aa).

Met-1 bears the Blocked amino end (Met) mark. 8 residues coordinate Zn(2+): Cys-62, Cys-65, Cys-72, His-75, Cys-102, Cys-105, Cys-149, and Cys-152. Residues 185-204 (SMQPDEDEDDAGVSPQELAE) form a disordered region. Residues Asp-527, Asp-529, and Asp-531 each contribute to the Mg(2+) site. Residues 951-971 (VEEPPTNLSEHGAAWEVESDD) form a disordered region.

Belongs to the RNA polymerase beta' chain family. As to quaternary structure, part of the RNA polymerase complex. Requires Mg(2+) as cofactor. It depends on Zn(2+) as a cofactor. In terms of processing, the N-terminus is blocked.

The protein localises to the cytoplasm. It carries out the reaction RNA(n) + a ribonucleoside 5'-triphosphate = RNA(n+1) + diphosphate. Its function is as follows. DNA-dependent RNA polymerase (RNAP) catalyzes the transcription of DNA into RNA using the four ribonucleoside triphosphates as substrates. Forms the clamp head domain. This chain is DNA-directed RNA polymerase subunit Rpo1N, found in Halobacterium salinarum (strain ATCC 29341 / DSM 671 / R1).